The chain runs to 140 residues: Profilin (140 aa).

Belongs to the profilin family. In terms of assembly, occurs in many kinds of cells as a complex with monomeric actin in a 1:1 ratio.

Binds to actin and affects the structure of the cytoskeleton. At high concentrations, profilin prevents the polymerization of actin, whereas it enhances it at low concentrations. By binding to PIP2, it inhibits the formation of IP3 and DG. This chain is Profilin, found in Suberites domuncula (Sponge).